The chain runs to 264 residues: COP9 signalosome complex subunit 7b (264 aa).

N-acetylalanine is present on Ala-2. The 158-residue stretch at 2 to 159 (AGEQKPSSNL…QLLEVDFCIG (158 aa)) folds into the PCI domain. Residues 188-237 (IEQQVLRANQYKENHNRTQQQVEAEVTNIKKTLKATASSSAQEMEQQLAE) adopt a coiled-coil conformation. Residues 223-232 (TASSSAQEME) show a composition bias toward polar residues. The segment at 223–264 (TASSSAQEMEQQLAERECPPHAEQRQPTKKMSKVKGLVSSRH) is disordered. The segment covering 235–248 (LAERECPPHAEQRQ) has biased composition (basic and acidic residues). Ser-261 bears the Phosphothreonine mark. Arg-263 is subject to Phosphoserine.

It belongs to the CSN7/EIF3M family. CSN7 subfamily. In terms of assembly, component of the CSN complex, composed of COPS1/GPS1, COPS2, COPS3, COPS4, COPS5, COPS6, COPS7 (COPS7A or COPS7B), COPS8 and COPS9 isoform 1. In the complex, it probably interacts directly with COPS1, COPS2, COPS4, COPS5, COPS6 and COPS8. Interacts with EIF3S6. As to quaternary structure, (Microbial infection) Interacts with vaccinia virus protein C9L.

The protein localises to the cytoplasm. Its subcellular location is the nucleus. Functionally, component of the COP9 signalosome complex (CSN), a complex involved in various cellular and developmental processes. The CSN complex is an essential regulator of the ubiquitin (Ubl) conjugation pathway by mediating the deneddylation of the cullin subunits of SCF-type E3 ligase complexes, leading to decrease the Ubl ligase activity of SCF-type complexes such as SCF, CSA or DDB2. The complex is also involved in phosphorylation of p53/TP53, JUN, I-kappa-B-alpha/NFKBIA, ITPK1 and IRF8/ICSBP, possibly via its association with CK2 and PKD kinases. CSN-dependent phosphorylation of TP53 and JUN promotes and protects degradation by the Ubl system, respectively. The chain is COP9 signalosome complex subunit 7b (COPS7B) from Homo sapiens (Human).